A 184-amino-acid polypeptide reads, in one-letter code: Protein N-terminal glutamine amidohydrolase (184 aa).

Active-site residues include Cys14, His63, and Asp78.

The protein belongs to the NTAQ1 family. Monomer.

It catalyses the reaction N-terminal L-glutaminyl-[protein] + H2O = N-terminal L-glutamyl-[protein] + NH4(+). In terms of biological role, mediates the side-chain deamidation of N-terminal glutamine residues to glutamate, an important step in N-end rule pathway of protein degradation. Conversion of the resulting N-terminal glutamine to glutamate renders the protein susceptible to arginylation, polyubiquitination and degradation as specified by the N-end rule. Does not act on substrates with internal or C-terminal glutamine and does not act on non-glutamine residues in any position. In Caenorhabditis elegans, this protein is Protein N-terminal glutamine amidohydrolase.